The following is a 377-amino-acid chain: Alanine racemase (377 aa).

The active-site Proton acceptor; specific for D-alanine is the Lys35. The residue at position 35 (Lys35) is an N6-(pyridoxal phosphate)lysine. Arg130 lines the substrate pocket. Tyr260 serves as the catalytic Proton acceptor; specific for L-alanine. Met312 is a binding site for substrate.

This sequence belongs to the alanine racemase family. The cofactor is pyridoxal 5'-phosphate.

The catalysed reaction is L-alanine = D-alanine. Its pathway is amino-acid biosynthesis; D-alanine biosynthesis; D-alanine from L-alanine: step 1/1. Its function is as follows. Catalyzes the interconversion of L-alanine and D-alanine. May also act on other amino acids. This chain is Alanine racemase (alr), found in Leptothrix cholodnii (strain ATCC 51168 / LMG 8142 / SP-6) (Leptothrix discophora (strain SP-6)).